A 63-amino-acid chain; its full sequence is Large ribosomal subunit protein uL29 (63 aa).

Belongs to the universal ribosomal protein uL29 family.

This is Large ribosomal subunit protein uL29 from Serratia proteamaculans (strain 568).